The sequence spans 290 residues: Acetyl-coenzyme A carboxylase carboxyl transferase subunit beta (290 aa).

The CoA carboxyltransferase N-terminal domain maps to 30 to 290 (IMTKCPKCKK…HAGQEVNKDA (261 aa)). Residues Cys-34, Cys-37, Cys-53, and Cys-56 each contribute to the Zn(2+) site. The C4-type zinc finger occupies 34 to 56 (CPKCKKIMYTKELSENLNVCFNC).

The protein belongs to the AccD/PCCB family. In terms of assembly, acetyl-CoA carboxylase is a heterohexamer composed of biotin carboxyl carrier protein (AccB), biotin carboxylase (AccC) and two subunits each of ACCase subunit alpha (AccA) and ACCase subunit beta (AccD). Requires Zn(2+) as cofactor.

It is found in the cytoplasm. It catalyses the reaction N(6)-carboxybiotinyl-L-lysyl-[protein] + acetyl-CoA = N(6)-biotinyl-L-lysyl-[protein] + malonyl-CoA. It functions in the pathway lipid metabolism; malonyl-CoA biosynthesis; malonyl-CoA from acetyl-CoA: step 1/1. Its function is as follows. Component of the acetyl coenzyme A carboxylase (ACC) complex. Biotin carboxylase (BC) catalyzes the carboxylation of biotin on its carrier protein (BCCP) and then the CO(2) group is transferred by the transcarboxylase to acetyl-CoA to form malonyl-CoA. The sequence is that of Acetyl-coenzyme A carboxylase carboxyl transferase subunit beta from Staphylococcus carnosus (strain TM300).